Here is a 474-residue protein sequence, read N- to C-terminus: Flotillin-like protein 3 (474 aa).

C35 carries the S-palmitoyl cysteine lipid modification. 2 coiled-coil regions span residues 235–255 and 305–325; these read ENQR…KKAA and QYET…KEAE.

It belongs to the band 7/mec-2 family. Flotillin subfamily. May be palmitoylated. As to expression, expressed in all plant organs. Primarily expressed in vascular tissues. No change in spatial expression in root upon inoculation. Expression limited to the nodule vascular tissue.

It is found in the cell membrane. Its subcellular location is the membrane. The protein resides in the caveola. In terms of biological role, may act as a scaffolding protein within caveolar membranes, functionally participating in formation of caveolae or caveolae-like vesicles. May be involved in nodule formation. This is Flotillin-like protein 3 (FLOT3) from Medicago truncatula (Barrel medic).